The following is a 296-amino-acid chain: Co-chaperone protein DjlA (296 aa).

Over 1-15 the chain is Periplasmic; that stretch reads MNLRDFFVITTWWGK. A helical membrane pass occupies residues 16 to 39; the sequence is ILGAFFGYLTAGPVGALFGILVGN. The Cytoplasmic segment spans residues 40–296; the sequence is FFDRGLVSYY…YELICETKGW (257 aa). The segment at 200 to 225 is disordered; that stretch reads QHYHNQQEYKHTSSSQGQQGYKPQSP. Residues 211–221 are compositionally biased toward polar residues; that stretch reads TSSSQGQQGYK. Residues 231-296 enclose the J domain; sequence HAFALLEVSP…YELICETKGW (66 aa).

As to quaternary structure, homodimer.

The protein localises to the cell inner membrane. In terms of biological role, regulatory DnaK co-chaperone. Direct interaction between DnaK and DjlA is needed for the induction of the wcaABCDE operon, involved in the synthesis of a colanic acid polysaccharide capsule, possibly through activation of the RcsB/RcsC phosphotransfer signaling pathway. The colanic acid capsule may help the bacterium survive conditions outside the host. This is Co-chaperone protein DjlA from Legionella pneumophila subsp. pneumophila (strain Philadelphia 1 / ATCC 33152 / DSM 7513).